We begin with the raw amino-acid sequence, 401 residues long: Tyrosine--tRNA ligase (401 aa).

The 'HIGH' region motif lies at 42–51 (PTAPDLHLGH). The short motif at 226–230 (KMSKS) is the 'KMSKS' region element. Residue lysine 229 coordinates ATP. The S4 RNA-binding domain maps to 336–397 (IALAQLLKQI…GKRRIAKLSI (62 aa)).

The protein belongs to the class-I aminoacyl-tRNA synthetase family. TyrS type 2 subfamily. Homodimer.

The protein localises to the cytoplasm. The catalysed reaction is tRNA(Tyr) + L-tyrosine + ATP = L-tyrosyl-tRNA(Tyr) + AMP + diphosphate + H(+). Its function is as follows. Catalyzes the attachment of tyrosine to tRNA(Tyr) in a two-step reaction: tyrosine is first activated by ATP to form Tyr-AMP and then transferred to the acceptor end of tRNA(Tyr). This is Tyrosine--tRNA ligase from Legionella pneumophila (strain Lens).